We begin with the raw amino-acid sequence, 125 residues long: Small ribosomal subunit protein uS13 (125 aa).

The protein belongs to the universal ribosomal protein uS13 family. In terms of assembly, part of the 30S ribosomal subunit. Forms a loose heterodimer with protein S19. Forms two bridges to the 50S subunit in the 70S ribosome.

Functionally, located at the top of the head of the 30S subunit, it contacts several helices of the 16S rRNA. In the 70S ribosome it contacts the 23S rRNA (bridge B1a) and protein L5 of the 50S subunit (bridge B1b), connecting the 2 subunits; these bridges are implicated in subunit movement. Contacts the tRNAs in the A and P-sites. This Rickettsia bellii (strain OSU 85-389) protein is Small ribosomal subunit protein uS13.